We begin with the raw amino-acid sequence, 423 residues long: vacuole-related protein 17 (423 aa).

Ala2 carries the N-acetylalanine modification. A disordered region spans residues Ala109–Pro134. Positions Thr110–Ser170 are MYO2-binding. Polar residues predominate over residues Pro116 to Ser131. The residue at position 119 (Ser119) is a Phosphoserine. Thr149 is subject to Phosphothreonine. The segment at Pro150 to Tyr211 is disordered. At Ser178 the chain carries Phosphoserine. Positions Gln182 to Ala192 are enriched in basic residues. Residues Leu199–Tyr211 show a composition bias toward polar residues. Thr248 is modified (phosphothreonine). Phosphoserine is present on Ser269. Positions Ser290–Gly380 are VAC8-binding.

This sequence belongs to the VAC17 family. As to quaternary structure, interacts with MYO2 and VAC8. Interacts with ATG18.

The protein localises to the vacuole membrane. In terms of biological role, vacuole-specific MYO2 receptor required for vacuole inheritance. Binds simultaneously to MYO2 and to VAC8, a vacuolar membrane protein, forming a transport complex which moves the attached vacuole membrane along actin cables into the bud. Once the vacuole arrives in the bud, VAC17 is degraded, depositing the vacuole in its correct location. The chain is vacuole-related protein 17 (VAC17) from Saccharomyces cerevisiae (strain ATCC 204508 / S288c) (Baker's yeast).